Consider the following 484-residue polypeptide: tRNA sulfurtransferase (484 aa).

The 105-residue stretch at 63-167 folds into the THUMP domain; that stretch reads KEMGERLTCM…DKRLFVIHSQ (105 aa). ATP contacts are provided by residues 185–186, lysine 267, glycine 289, and glutamine 298; that span reads LM. The cysteines at positions 346 and 457 are disulfide-linked. Residues 405-483 form the Rhodanese domain; the sequence is ALAGQIVIDI…GHANVRVYRP (79 aa). Catalysis depends on cysteine 457, which acts as the Cysteine persulfide intermediate.

This sequence belongs to the ThiI family.

The protein resides in the cytoplasm. The enzyme catalyses [ThiI sulfur-carrier protein]-S-sulfanyl-L-cysteine + a uridine in tRNA + 2 reduced [2Fe-2S]-[ferredoxin] + ATP + H(+) = [ThiI sulfur-carrier protein]-L-cysteine + a 4-thiouridine in tRNA + 2 oxidized [2Fe-2S]-[ferredoxin] + AMP + diphosphate. It catalyses the reaction [ThiS sulfur-carrier protein]-C-terminal Gly-Gly-AMP + S-sulfanyl-L-cysteinyl-[cysteine desulfurase] + AH2 = [ThiS sulfur-carrier protein]-C-terminal-Gly-aminoethanethioate + L-cysteinyl-[cysteine desulfurase] + A + AMP + 2 H(+). It functions in the pathway cofactor biosynthesis; thiamine diphosphate biosynthesis. Its function is as follows. Catalyzes the ATP-dependent transfer of a sulfur to tRNA to produce 4-thiouridine in position 8 of tRNAs, which functions as a near-UV photosensor. Also catalyzes the transfer of sulfur to the sulfur carrier protein ThiS, forming ThiS-thiocarboxylate. This is a step in the synthesis of thiazole, in the thiamine biosynthesis pathway. The sulfur is donated as persulfide by IscS. This is tRNA sulfurtransferase from Pseudomonas fluorescens (strain Pf0-1).